Here is an 818-residue protein sequence, read N- to C-terminus: Auxin response factor 12 (818 aa).

Residues Met1–Gly10 are compositionally biased toward low complexity. The segment at Met1–Glu24 is disordered. The segment covering Pro11–Pro20 has biased composition (pro residues). Residues Phe135–Ser237 constitute a DNA-binding region (TF-B3). 2 disordered regions span residues Asn526–Pro565 and Gly629–Gly648. Residues Gly629 to Asp640 are compositionally biased toward polar residues. The region spanning Arg719–Asp803 is the PB1 domain.

This sequence belongs to the ARF family. Homodimers and heterodimers. In terms of tissue distribution, expressed in roots, culms, leaves and young panicles.

The protein localises to the nucleus. In terms of biological role, auxin response factors (ARFs) are transcriptional factors that bind specifically to the DNA sequence 5'-TGTCTC-3' found in the auxin-responsive promoter elements (AuxREs). The polypeptide is Auxin response factor 12 (ARF12) (Oryza sativa subsp. japonica (Rice)).